Here is a 190-residue protein sequence, read N- to C-terminus: Shikimate kinase (190 aa).

G22–T27 provides a ligand contact to ATP. S26 is a Mg(2+) binding site. Residues D44, R68, and G90 each coordinate substrate. ATP is bound at residue R127. R146 serves as a coordination point for substrate.

Belongs to the shikimate kinase family. In terms of assembly, monomer. Mg(2+) is required as a cofactor.

The protein resides in the cytoplasm. The catalysed reaction is shikimate + ATP = 3-phosphoshikimate + ADP + H(+). Its pathway is metabolic intermediate biosynthesis; chorismate biosynthesis; chorismate from D-erythrose 4-phosphate and phosphoenolpyruvate: step 5/7. In terms of biological role, catalyzes the specific phosphorylation of the 3-hydroxyl group of shikimic acid using ATP as a cosubstrate. This Microcystis aeruginosa (strain NIES-843 / IAM M-2473) protein is Shikimate kinase.